Reading from the N-terminus, the 272-residue chain is Ethanolamine ammonia-lyase small subunit (272 aa).

3 residues coordinate adenosylcob(III)alamin: Val-161, Glu-182, and Cys-211.

The protein belongs to the EutC family. As to quaternary structure, the basic unit is a heterodimer which dimerizes to form tetramers. The heterotetramers trimerize; 6 large subunits form a core ring with 6 small subunits projecting outwards. It depends on adenosylcob(III)alamin as a cofactor.

Its subcellular location is the bacterial microcompartment. The enzyme catalyses ethanolamine = acetaldehyde + NH4(+). The protein operates within amine and polyamine degradation; ethanolamine degradation. Functionally, catalyzes the deamination of various vicinal amino-alcohols to oxo compounds. Allows this organism to utilize ethanolamine as the sole source of nitrogen and carbon in the presence of external vitamin B12. This chain is Ethanolamine ammonia-lyase small subunit, found in Xanthomonas campestris pv. campestris (strain B100).